We begin with the raw amino-acid sequence, 106 residues long: Flagellar transcriptional regulator FlhD (106 aa).

The protein belongs to the FlhD family. Homodimer; disulfide-linked. Forms a heterohexamer composed of two FlhC and four FlhD subunits. Each FlhC binds a FlhD dimer, forming a heterotrimer, and a hexamer assembles by dimerization of two heterotrimers.

The protein resides in the cytoplasm. Functionally, functions in complex with FlhC as a master transcriptional regulator that regulates transcription of several flagellar and non-flagellar operons by binding to their promoter region. Activates expression of class 2 flagellar genes, including fliA, which is a flagellum-specific sigma factor that turns on the class 3 genes. Also regulates genes whose products function in a variety of physiological pathways. The protein is Flagellar transcriptional regulator FlhD of Burkholderia pseudomallei (strain 1710b).